Consider the following 87-residue polypeptide: U3-theraphotoxin-Hhn1b (87 aa).

The first 24 residues, 1–24, serve as a signal peptide directing secretion; that stretch reads MVNMKASMFLTFAGLVLLFVVCYA. Residues 25–52 constitute a propeptide that is removed on maturation; sequence SESEEKEFPREMLSSIFAVDNDFKQEER. Disulfide bonds link cysteine 54–cysteine 67 and cysteine 61–cysteine 72.

The protein belongs to the neurotoxin 10 (Hwtx-1) family. 51 (Hntx-8) subfamily. Hntx-8 sub-subfamily. Expressed by the venom gland.

The protein resides in the secreted. Functionally, ion channel inhibitor. The polypeptide is U3-theraphotoxin-Hhn1b (Cyriopagopus hainanus (Chinese bird spider)).